The sequence spans 169 residues: uncharacterized protein (169 aa).

This is an uncharacterized protein from Mycoplasma pneumoniae (strain ATCC 29342 / M129 / Subtype 1) (Mycoplasmoides pneumoniae).